A 102-amino-acid chain; its full sequence is Large ribosomal subunit protein bL21 (102 aa).

The protein belongs to the bacterial ribosomal protein bL21 family. In terms of assembly, part of the 50S ribosomal subunit. Contacts protein L20.

Its function is as follows. This protein binds to 23S rRNA in the presence of protein L20. In Citrifermentans bemidjiense (strain ATCC BAA-1014 / DSM 16622 / JCM 12645 / Bem) (Geobacter bemidjiensis), this protein is Large ribosomal subunit protein bL21.